Consider the following 818-residue polypeptide: H(+)/Cl(-) exchange transporter 3 (818 aa).

The Cytoplasmic portion of the chain corresponds to methionine 1 to alanine 125. 3 consecutive short sequence motifs (di-leucine internalization motif; mediates targeting to late endosome and lysosome membranes) follow at residues leucine 28–leucine 29, leucine 46–leucine 47, and leucine 71–leucine 75. The chain crosses the membrane as a helical span at residues tryptophan 126 to serine 163. N-linked (GlcNAc...) asparagine glycosylation is present at asparagine 177. Residues methionine 209–phenylalanine 232 form a helical membrane-spanning segment. The Selectivity filter part_1 motif lies at glycine 238 to proline 242. Serine 239 lines the chloride pocket. The helical intramembrane region spans isoleucine 241–leucine 248. Transmembrane regions (helical) follow at residues glycine 258–glycine 276 and glutamate 282–proline 301. A Selectivity filter part_2 motif is present at residues glycine 280–proline 284. 2 intramembrane regions (helical) span residues valine 313–alanine 325 and proline 329–leucine 337. 3 consecutive transmembrane segments (helical) span residues leucine 349 to asparagine 367, phenylalanine 391 to arginine 416, and phenylalanine 423 to phenylalanine 443. N-linked (GlcNAc...) asparagine glycosylation is found at asparagine 451 and asparagine 479. 2 consecutive transmembrane segments (helical) span residues isoleucine 500–isoleucine 520 and glycine 525–alanine 544. The short motif at glycine 525–proline 529 is the Selectivity filter part_3 element. Phenylalanine 527 contacts chloride. 2 consecutive intramembrane regions (helical) follow at residues glycine 572–valine 586 and threonine 590–threonine 601. Positions glycine 602–glutamate 605 form an intramembrane region, note=Loop between two helices. Residues tyrosine 606–phenylalanine 624 form a helical membrane-spanning segment. The Cytoplasmic segment spans residues glycine 625–asparagine 818. Tyrosine 630 is a chloride binding site. CBS domains follow at residues methionine 658 to lysine 722 and leucine 755 to proline 812. Residues tyrosine 689–glycine 691 and threonine 796–aspartate 799 each bind ATP.

The protein belongs to the chloride channel (TC 2.A.49) family. ClC-3/CLCN3 subfamily. As to quaternary structure, monomer and homodimer. Forms heterodimers with CLCN4. In terms of assembly, interacts with GOPC, PDZK1 and NHERF1/EBP50. N-glycosylated. In terms of tissue distribution, expressed primarily in tissues derived from neuroectoderm. Within the brain, its expression is particularly evident in the hippocampus, olfactory cortex, and olfactory bulb. Highly expressed in aortic and coronary vascular smooth muscle cells, and aortic endothelial cells. Also expressed in tracheal and alveolar epithelial cells, and intima and media of the pulmonary vessels. Expressed in bronchus and colon (at protein level).

The protein resides in the early endosome membrane. It is found in the late endosome membrane. The protein localises to the lysosome membrane. Its subcellular location is the cell membrane. It localises to the golgi apparatus membrane. The protein resides in the cell projection. It is found in the ruffle membrane. In terms of biological role, strongly outwardly rectifying, electrogenic H(+)/Cl(-)exchanger which mediates the exchange of chloride ions against protons. The CLC channel family contains both chloride channels and proton-coupled anion transporters that exchange chloride or another anion for protons. The presence of conserved gating glutamate residues is typical for family members that function as antiporters. Strongly outwardly rectifying, electrogenic H(+)/Cl(-)exchanger which mediates the exchange of chloride ions against protons. The protein is H(+)/Cl(-) exchange transporter 3 (CLCN3) of Homo sapiens (Human).